A 319-amino-acid polypeptide reads, in one-letter code: Acetyl esterase (319 aa).

The short motif at 91 to 93 is the Involved in the stabilization of the negatively charged intermediate by the formation of the oxyanion hole element; that stretch reads HGG. Residues Ser-165, Asp-262, and His-292 contribute to the active site.

Belongs to the 'GDXG' lipolytic enzyme family. In terms of assembly, homodimer. Interacts with MalT and MelA.

The protein localises to the cytoplasm. Displays esterase activity towards short chain fatty esters (acyl chain length of up to 8 carbons). Able to hydrolyze triacetylglycerol (triacetin) and tributyrylglycerol (tributyrin), but not trioleylglycerol (triolein) or cholesterol oleate. Negatively regulates MalT activity by antagonizing maltotriose binding. Inhibits MelA galactosidase activity. This Escherichia coli O157:H7 protein is Acetyl esterase.